A 755-amino-acid polypeptide reads, in one-letter code: Diamine oxidase [copper-containing] (755 aa).

A signal peptide spans 1–24 (MGRGTLALGWAGAALLLLQMLAAA). Residue asparagine 115 is glycosylated (N-linked (GlcNAc...) asparagine). A disulfide bridge connects residues cysteine 182 and cysteine 186. Residue aspartate 376 is the Proton acceptor of the active site. Cysteine 394 and cysteine 420 are oxidised to a cystine. Catalysis depends on tyrosine 464, which acts as the Schiff-base intermediate with substrate; via topaquinone. At tyrosine 464 the chain carries 2',4',5'-topaquinone. Cu(2+) is bound by residues histidine 513 and histidine 515. The Ca(2+) site is built by aspartate 522, leucine 523, and aspartate 524. Asparagine 541 carries N-linked (GlcNAc...) asparagine glycosylation. Ca(2+) contacts are provided by glutamate 565, phenylalanine 656, asparagine 659, glutamate 661, aspartate 667, and leucine 668. Residue histidine 678 coordinates Cu(2+). A glycan (N-linked (GlcNAc...) asparagine) is linked at asparagine 749.

This sequence belongs to the copper/topaquinone oxidase family. In terms of assembly, homodimer; disulfide-linked. Cu(2+) is required as a cofactor. Ca(2+) serves as cofactor. The cofactor is L-topaquinone. Topaquinone (TPQ) is generated by copper-dependent autoxidation of a specific tyrosyl residue. Post-translationally, N-glycosylated; the glycans are primarily linear, di-, or tribranched fucosylated complex type.

The protein resides in the secreted. The protein localises to the extracellular space. It localises to the cell membrane. The catalysed reaction is histamine + O2 + H2O = imidazole-4-acetaldehyde + H2O2 + NH4(+). It carries out the reaction N(tau)-methylhistamine + O2 + H2O = 1-methylimidazole-4-acetaldehyde + H2O2 + NH4(+). The enzyme catalyses putrescine + O2 + H2O = 4-aminobutanal + H2O2 + NH4(+). It catalyses the reaction cadaverine + O2 + H2O = 5-aminopentanal + H2O2 + NH4(+). Its activity is regulated as follows. Inhibited by amiloride and amiloride analogs. Catalyzes the oxidative deamination of primary amines to the corresponding aldehydes with the concomitant production of hydrogen peroxide and ammonia. Its preferred substrates in vitro are the diamines histamine and 1-methylhistamine and it could therefore play a role in allergic and immune responses. Has a broad specificity for diamines and can also act on cadaverine and putrescine, two products of amino acid catabolism. It could also act on polyamines, like spermidine and spermine though less efficiently, and regulate various biological processes. This chain is Diamine oxidase [copper-containing], found in Sus scrofa (Pig).